The following is a 182-amino-acid chain: MPVAAYIEERVKIPENVQVEINNNEVVVKSGGKELRRRFEHPKIVIKKEGDEIVIFCEYPRRKDKAMVGTIRAHINNMIKGVTEGFTYKLKIRYAHFPMKVSVKGNEVIIENFLGEKHPRRARIMEGVTVKISGEDVIVTGIDKEKVGQTAANIEQATRIKGRDPRVFQDGIYIVEKAGKAI.

Belongs to the universal ribosomal protein uL6 family. Part of the 50S ribosomal subunit.

Functionally, this protein binds to the 23S rRNA, and is important in its secondary structure. It is located near the subunit interface in the base of the L7/L12 stalk, and near the tRNA binding site of the peptidyltransferase center. The polypeptide is Large ribosomal subunit protein uL6 (Methanocaldococcus jannaschii (strain ATCC 43067 / DSM 2661 / JAL-1 / JCM 10045 / NBRC 100440) (Methanococcus jannaschii)).